Reading from the N-terminus, the 202-residue chain is Orotate phosphoribosyltransferase (202 aa).

5-phospho-alpha-D-ribose 1-diphosphate-binding positions include Arg94, Lys98, His100, and 120–128 (EDLISTGGS). Residue Ser124 coordinates orotate.

Belongs to the purine/pyrimidine phosphoribosyltransferase family. PyrE subfamily. As to quaternary structure, homodimer. Requires Mg(2+) as cofactor.

It catalyses the reaction orotidine 5'-phosphate + diphosphate = orotate + 5-phospho-alpha-D-ribose 1-diphosphate. It participates in pyrimidine metabolism; UMP biosynthesis via de novo pathway; UMP from orotate: step 1/2. Its function is as follows. Catalyzes the transfer of a ribosyl phosphate group from 5-phosphoribose 1-diphosphate to orotate, leading to the formation of orotidine monophosphate (OMP). This chain is Orotate phosphoribosyltransferase, found in Oceanobacillus iheyensis (strain DSM 14371 / CIP 107618 / JCM 11309 / KCTC 3954 / HTE831).